The following is a 172-amino-acid chain: Myosin regulatory light polypeptide 9 (172 aa).

Positions 1–16 (MSSKRAKTKTTKKRPQ) are enriched in basic residues. Positions 1 to 20 (MSSKRAKTKTTKKRPQRATS) are disordered. Ser2 carries the N-acetylserine modification. The residue at position 19 (Thr19) is a Phosphothreonine; by MLCK, CIT and ROCK2. Ser20 carries the phosphoserine; by CDC42BP, CIT, MLCK, PAK1, ROCK1, ROCK2, DAPK1, DAPK2 and ZIPK/DAPK3 modification. EF-hand domains lie at 29-64 (SQIQEFKEAFNMIDQNRDGFIDKEDLHDMLASLGKN), 98-133 (DPEDVIRNAFACFDEEATGTIQEDYLRELLTTMGDR), and 134-169 (FTDEEVDELYREAPIDKKGNFNYIEFTRILKHGAKD). Ca(2+) contacts are provided by Asp42, Asn44, Asp46, and Asp53.

Myosin is a hexamer of 2 heavy chains and 4 light chains: interacts with myosin heavy chain MYO19. Interacts with LUZP1; the interaction results in inhibition of phosphorylation of MYL9 by DAPK3. Phosphorylation increases the actin-activated myosin ATPase activity and thereby regulates the contractile activity. It is required to generate the driving force in the migration of the cells but not necessary for localization of myosin-2 at the leading edge. Phosphorylation is required for myotube formation. Phosphorylated by DAPK3; DAPK3-mediated phosphorylation is inhibited by LUZP1.

Its subcellular location is the cytoplasm. The protein resides in the cytoskeleton. It is found in the cell cortex. Myosin regulatory subunit that plays an important role in regulation of both smooth muscle and nonmuscle cell contractile activity via its phosphorylation. Implicated in cytokinesis, receptor capping, and cell locomotion. In myoblasts, may regulate PIEZO1-dependent cortical actomyosin assembly involved in myotube formation. This is Myosin regulatory light polypeptide 9 (MYL9) from Bos taurus (Bovine).